The primary structure comprises 127 residues: Large ribosomal subunit protein bL20 (127 aa).

Belongs to the bacterial ribosomal protein bL20 family.

In terms of biological role, binds directly to 23S ribosomal RNA and is necessary for the in vitro assembly process of the 50S ribosomal subunit. It is not involved in the protein synthesizing functions of that subunit. This is Large ribosomal subunit protein bL20 from Corynebacterium aurimucosum (strain ATCC 700975 / DSM 44827 / CIP 107346 / CN-1) (Corynebacterium nigricans).